The following is a 216-amino-acid chain: MNLILMGLPGAGKGTQAEQIVAKYNIPHISTGDMFRAAMKAETEMGLQAKSFIDKGALVPDEVTIGIVRERLSQEDCVRGFLLDGFPRTVAQASALEEIMKDLGKKIDYVLNINVDSGLLLKRLTGRRICKECGATYHLEFNAPAKADVCDKCGGELYQRSDDNEETVANRLDVNIKQTKPLLDFYEELGYLQSINGEQDINKVFADIDVLIGGLA.

ATP is bound at residue 10-15; sequence GAGKGT. Residues 30-59 are NMP; sequence STGDMFRAAMKAETEMGLQAKSFIDKGALV. Residues T31, R36, 57 to 59, 85 to 88, and Q92 contribute to the AMP site; these read ALV and GFPR. Residues 126 to 163 are LID; sequence GRRICKECGATYHLEFNAPAKADVCDKCGGELYQRSDD. Position 127 (R127) interacts with ATP. The Zn(2+) site is built by C130 and C133. Residue 136-137 coordinates ATP; the sequence is TY. 2 residues coordinate Zn(2+): C150 and C153. AMP-binding residues include R160 and R171. Q199 is an ATP binding site.

This sequence belongs to the adenylate kinase family. Monomer.

It localises to the cytoplasm. It catalyses the reaction AMP + ATP = 2 ADP. It participates in purine metabolism; AMP biosynthesis via salvage pathway; AMP from ADP: step 1/1. Functionally, catalyzes the reversible transfer of the terminal phosphate group between ATP and AMP. Plays an important role in cellular energy homeostasis and in adenine nucleotide metabolism. This Bacillus anthracis (strain A0248) protein is Adenylate kinase.